Consider the following 118-residue polypeptide: Fluoride-specific ion channel FluC 1 (118 aa).

4 helical membrane passes run 5 to 25 (FVLV…ISVL), 34 to 54 (FPFA…FLVS), 56 to 76 (ALGP…YTTF), and 98 to 118 (YLGC…MLGV). Positions 71 and 74 each coordinate Na(+).

The protein belongs to the fluoride channel Fluc/FEX (TC 1.A.43) family.

Its subcellular location is the cell membrane. The catalysed reaction is fluoride(in) = fluoride(out). Na(+) is not transported, but it plays an essential structural role and its presence is essential for fluoride channel function. In terms of biological role, fluoride-specific ion channel. Important for reducing fluoride concentration in the cell, thus reducing its toxicity. The protein is Fluoride-specific ion channel FluC 1 of Listeria monocytogenes serotype 4b (strain F2365).